Reading from the N-terminus, the 116-residue chain is MANYRDRRVGQEIMREVNDILNKRIRDPRVQGITITDVRVTGDLQQATIYYSLLSDLASEQQKAQQGLDKAKGLIRKELGQRLTLYKTPELIFERDESVQYGNHIDELIRKLNQGE.

The protein belongs to the RbfA family. As to quaternary structure, monomer. Binds 30S ribosomal subunits, but not 50S ribosomal subunits or 70S ribosomes.

It localises to the cytoplasm. Its function is as follows. One of several proteins that assist in the late maturation steps of the functional core of the 30S ribosomal subunit. Associates with free 30S ribosomal subunits (but not with 30S subunits that are part of 70S ribosomes or polysomes). Required for efficient processing of 16S rRNA. May interact with the 5'-terminal helix region of 16S rRNA. This is Ribosome-binding factor A from Enterococcus faecalis (strain ATCC 700802 / V583).